We begin with the raw amino-acid sequence, 543 residues long: Glutamyl-tRNA(Gln) amidotransferase subunit A, chloroplastic/mitochondrial (543 aa).

Catalysis depends on charge relay system residues Lys-121 and Ser-196. Catalysis depends on Ser-220, which acts as the Acyl-ester intermediate.

The protein belongs to the amidase family. GatA subfamily. As to quaternary structure, subunit of the heterotrimeric GatCAB amidotransferase (AdT) complex, composed of A, B and C subunits.

The protein resides in the mitochondrion. It is found in the plastid. It localises to the chloroplast stroma. It carries out the reaction L-glutamyl-tRNA(Gln) + L-glutamine + ATP + H2O = L-glutaminyl-tRNA(Gln) + L-glutamate + ADP + phosphate + H(+). Functionally, allows the formation of correctly charged Gln-tRNA(Gln) through the transamidation of misacylated Glu-tRNA(Gln) in chloroplasts and mitochondria. The reaction takes place in the presence of glutamine and ATP through an activated gamma-phospho-Glu-tRNA(Gln). This chain is Glutamyl-tRNA(Gln) amidotransferase subunit A, chloroplastic/mitochondrial, found in Zea mays (Maize).